Here is a 246-residue protein sequence, read N- to C-terminus: Proteasome subunit alpha type-6 (246 aa).

This sequence belongs to the peptidase T1A family. As to quaternary structure, the 26S proteasome consists of a 20S proteasome core and two 19S regulatory subunits. The 20S proteasome core is composed of 28 subunits that are arranged in four stacked rings, resulting in a barrel-shaped structure. The two end rings are each formed by seven alpha subunits, and the two central rings are each formed by seven beta subunits. The catalytic chamber with the active sites is on the inside of the barrel.

Its subcellular location is the cytoplasm. It is found in the nucleus. The proteasome is a multicatalytic proteinase complex which is characterized by its ability to cleave peptides with Arg, Phe, Tyr, Leu, and Glu adjacent to the leaving group at neutral or slightly basic pH. The proteasome has an ATP-dependent proteolytic activity. The sequence is that of Proteasome subunit alpha type-6 (PAA1) from Oryza sativa subsp. japonica (Rice).